We begin with the raw amino-acid sequence, 1506 residues long: Phosphatidylinositol 3-kinase C2 domain-containing subunit gamma (1506 aa).

Residues 1–34 (MAYSWQTEPNRTEPQEDGSDTQQFHHTNQHLSSR) are disordered. A compositionally biased stretch (polar residues) spans 20 to 34 (DTQQFHHTNQHLSSR). The 87-residue stretch at 285-371 (DTKFRVKISI…IQLHLQKNRD (87 aa)) folds into the PI3K-RBD domain. Residues 541–689 (LQSHLSFTVC…SPLTLQIDFP (149 aa)) enclose the C2 PI3K-type domain. A PIK helical domain is found at 704–880 (RTDHEEPPRE…QELLAALQFC (177 aa)). In terms of domain architecture, PI3K/PI4K catalytic spans 949-1227 (DRDACSYFTS…KIKESLECFP (279 aa)). Residues 955–961 (YFTSNAS) form a G-loop region. Residues 1091–1099 (GVCDRHNDN) are catalytic loop. Residues 1110-1136 (HIDFGKFLGHAQTFGGIKRDRAPFIFT) are activation loop. Residues 1260–1372 (LNKTRTIQRV…SFFLSEHIQP (113 aa)) form the PX domain. The region spanning 1381-1506 (DPGENSLDKS…KWYPLGNSII (126 aa)) is the C2 domain.

It belongs to the PI3/PI4-kinase family. Expressed predominantly in liver. Also found in kidney, lung and lymphoid tissue. Down-regulated in BeF3 cells expressing the BCR-ABL oncogene p185.

Its subcellular location is the membrane. It carries out the reaction a 1,2-diacyl-sn-glycero-3-phospho-(1D-myo-inositol 4-phosphate) + ATP = a 1,2-diacyl-sn-glycero-3-phospho-(1D-myo-inositol-3,4-bisphosphate) + ADP + H(+). It catalyses the reaction a 1,2-diacyl-sn-glycero-3-phospho-(1D-myo-inositol) + ATP = a 1,2-diacyl-sn-glycero-3-phospho-(1D-myo-inositol-3-phosphate) + ADP + H(+). Functionally, generates phosphatidylinositol 3-phosphate (PtdIns3P) and phosphatidylinositol 3,4-bisphosphate (PtdIns(3,4)P2) that act as second messengers. May play a role in SDF1A-stimulated chemotaxis. This Mus musculus (Mouse) protein is Phosphatidylinositol 3-kinase C2 domain-containing subunit gamma (Pik3c2g).